The chain runs to 164 residues: ATP synthase subunit b 1 (164 aa).

A helical transmembrane segment spans residues 8–28; that stretch reads PETWVAVAFVILMGVFAYFGV.

This sequence belongs to the ATPase B chain family. In terms of assembly, F-type ATPases have 2 components, F(1) - the catalytic core - and F(0) - the membrane proton channel. F(1) has five subunits: alpha(3), beta(3), gamma(1), delta(1), epsilon(1). F(0) has three main subunits: a(1), b(2) and c(10-14). The alpha and beta chains form an alternating ring which encloses part of the gamma chain. F(1) is attached to F(0) by a central stalk formed by the gamma and epsilon chains, while a peripheral stalk is formed by the delta and b chains.

Its subcellular location is the cell inner membrane. Its function is as follows. F(1)F(0) ATP synthase produces ATP from ADP in the presence of a proton or sodium gradient. F-type ATPases consist of two structural domains, F(1) containing the extramembraneous catalytic core and F(0) containing the membrane proton channel, linked together by a central stalk and a peripheral stalk. During catalysis, ATP synthesis in the catalytic domain of F(1) is coupled via a rotary mechanism of the central stalk subunits to proton translocation. Functionally, component of the F(0) channel, it forms part of the peripheral stalk, linking F(1) to F(0). The polypeptide is ATP synthase subunit b 1 (Rhodopseudomonas palustris (strain BisB18)).